Here is a 364-residue protein sequence, read N- to C-terminus: Acetylserotonin O-methyltransferase 1 (364 aa).

Residues Gly208, Asp231, Asp251, and Lys265 each coordinate S-adenosyl-L-homocysteine. The Proton acceptor role is filled by His269. Active-site residues include Glu300 and Glu330.

It belongs to the class I-like SAM-binding methyltransferase superfamily. Cation-independent O-methyltransferase family. As to quaternary structure, homodimer. Expressed in leaves, stems and flowers.

The protein resides in the cytoplasm. It carries out the reaction N-acetylserotonin + S-adenosyl-L-methionine = melatonin + S-adenosyl-L-homocysteine + H(+). It functions in the pathway aromatic compound metabolism; melatonin biosynthesis; melatonin from serotonin: step 1/2. Methyltransferase which catalyzes the transfer of a methyl group onto N-acetylserotonin, producing melatonin (N-acetyl-5-methoxytryptamine). The chain is Acetylserotonin O-methyltransferase 1 from Oryza sativa subsp. japonica (Rice).